A 295-amino-acid chain; its full sequence is Methylamine utilization protein MauJ (295 aa).

Its pathway is one-carbon metabolism; methylamine degradation. This Methylorubrum extorquens (strain ATCC 14718 / DSM 1338 / JCM 2805 / NCIMB 9133 / AM1) (Methylobacterium extorquens) protein is Methylamine utilization protein MauJ (mauJ).